The following is a 121-amino-acid chain: Large ribosomal subunit protein bL12 (121 aa).

Belongs to the bacterial ribosomal protein bL12 family. In terms of assembly, homodimer. Part of the ribosomal stalk of the 50S ribosomal subunit. Forms a multimeric L10(L12)X complex, where L10 forms an elongated spine to which 2 to 4 L12 dimers bind in a sequential fashion. Binds GTP-bound translation factors.

Functionally, forms part of the ribosomal stalk which helps the ribosome interact with GTP-bound translation factors. Is thus essential for accurate translation. The chain is Large ribosomal subunit protein bL12 from Escherichia coli O45:K1 (strain S88 / ExPEC).